We begin with the raw amino-acid sequence, 426 residues long: Interferon regulatory factor 8 (426 aa).

Positions 7-114 form a DNA-binding region, IRF tryptophan pentad repeat; that stretch reads GRRLRQWLIE…EPYKVYRIVP (108 aa).

The protein belongs to the IRF family. Interacts (via C-terminus) with TRIM21 (via C-terminus). Interacts with the BATF-JUNB heterodimer. Interacts with BATF (via bZIP domain); the interaction is direct. Interacts with COPS2. Interacts with SPI1. Ubiquitinated. Ubiquitination by TRIM21 in macrophages, a process that is strongly increased upon interferon gamma stimulation, leds to the enhanced transcriptional activity of target cytokine genes. Ubiquitination leads to its degradation by the proteasome. Post-translationally, sumoylated with SUMO3. Desumoylated by SENP1. As to expression, predominantly expressed in lymphoid tissues.

It is found in the nucleus. The protein resides in the cytoplasm. Its function is as follows. Transcription factor that specifically binds to the upstream regulatory region of type I interferon (IFN) and IFN-inducible MHC class I genes (the interferon consensus sequence (ICS)). Can both act as a transcriptional activator or repressor. Plays a negative regulatory role in cells of the immune system. Involved in CD8(+) dendritic cell differentiation by forming a complex with the BATF-JUNB heterodimer in immune cells, leading to recognition of AICE sequence (5'-TGAnTCA/GAAA-3'), an immune-specific regulatory element, followed by cooperative binding of BATF and IRF8 and activation of genes. Required for the development of plasmacytoid dendritic cells (pDCs), which produce most of the type I IFN in response to viral infection. Positively regulates macroautophagy in dendritic cells. Acts as a transcriptional repressor of osteoclast differentiation factors such as NFATC1 and EEIG1. The chain is Interferon regulatory factor 8 from Homo sapiens (Human).